Here is a 529-residue protein sequence, read N- to C-terminus: Nuclear protein localization protein 4 homolog 1 (529 aa).

Residues 129-266 form the MPN domain; the sequence is IQIENQELVN…ITEYSMDRHY (138 aa). A RanBP2-type zinc finger spans residues 499 to 529; sequence SGGAVWNCGHCTFQNEAARQDCSMCGLPAAD.

This sequence belongs to the NPL4 family. As to quaternary structure, forms a complex composed of ubxn-3, ufd-1, npl-4.1 and cdc-48.1; within the complex, interacts with ufd-1 and ubxn-3. Interacts with ufd-1. Interacts with elc-1/elongin C; the interaction may mediate the interaction between the npl-4-ufd-1-cdc-48 complex and the E3 ubiquitin ligase cul-2 complex.

Its subcellular location is the cytoplasm. The protein resides in the nucleus. Its function is as follows. In association with ufd-1 and ATPase cdc-48.1 and/or cdc-48.2, involved in the cytoplasmic elimination of misfolded proteins exported from the ER. This pathway, known as ERAD, prevents the activation of the unfolded protein response (UPR) caused by the accumulation of misfolded proteins in the ER. During S phase and in association with ufd-1, cdc-48.1 and/or cdc-48.2 and ubxn-3, ensures the degradation of DNA licensing factor cdt-1 after the initiation of DNA replication and thus the disassembly of the DNA replication CGM helicase complex by promoting the dissociation from chromatin of several of its components including cdc-45 and sld-5. Regulates ubxn-3 nuclear localization during S phase. The protein is Nuclear protein localization protein 4 homolog 1 of Caenorhabditis elegans.